The sequence spans 179 residues: Large ribosomal subunit protein uL5 (179 aa).

This sequence belongs to the universal ribosomal protein uL5 family. Part of the 50S ribosomal subunit; part of the 5S rRNA/L5/L18/L25 subcomplex. Contacts the 5S rRNA and the P site tRNA. Forms a bridge to the 30S subunit in the 70S ribosome.

This is one of the proteins that bind and probably mediate the attachment of the 5S RNA into the large ribosomal subunit, where it forms part of the central protuberance. In the 70S ribosome it contacts protein S13 of the 30S subunit (bridge B1b), connecting the 2 subunits; this bridge is implicated in subunit movement. Contacts the P site tRNA; the 5S rRNA and some of its associated proteins might help stabilize positioning of ribosome-bound tRNAs. This is Large ribosomal subunit protein uL5 from Geobacillus thermodenitrificans (strain NG80-2).